Here is a 1522-residue protein sequence, read N- to C-terminus: MDEKYTAKNRDKTFVVIEKRFKKNIIHRFSAKRSLFLFTPRNPIRRLAVCIATNVCFDYFLMFTIMINCVFLAMPDISEFAEYIFLGIYTMEMAIKLVAGGFFIDKYTYLRDAWNCLDFTVIMISYITLLLQTINDKVISDITGLRTFRVLRALRTLSIIPGLKTMVNALLRALRMLISVLILILFCLWIFSQAGVQLFGGALRHKCVLQIHGSPAFGKTYDEFYAEHIENSDNWLAKGNGEYVLCGNATGAGPCPTNYTCLPDIGENPNYGYTNFDSIGWSMLISFQLLTQDYWEDVYNKVIRAHSPWTVIYFIVINFFGSLYLMNLMLAVVATAYELEVKNTGKKLQQTAATAREQSLKEQERRNTLTVSEADSHVDDRNCTCCEQCCGCCYNPWLRVQSFAHCIITDSFTEVFIIFIIVLNTVFLAMEHHGMSMELKNVLKVANYVFTTVFVLEAILKLLAFNKQYFKSGWNICDLVVVVASLIDLGVEGLKGVSVFRSFRLLRVFHLAQSWTTMRLLLCIILNTLGSLGYLTIILIIVIYIFAVTGLQLFHTEYTPDKFRGEPVPRWNFNDFLHSFMMVFRILCGEWIEPMYDCMRACNGLCFLIFIPVTVFGKTLFFLFIGLVLGAFGSDTVEQEVEVSSFALPGPESKPCSVRERGISATDDNVKDDGQDEVQQNSEETKIDLRNNDKQSKDGMILENNCNNDSLASLGSLGSIPDIMDGSSVEDDISSCQQKDIQPCLPLFISSRFKCLREFDDTSHGKKWNNFRRQLMMVCENKYFETGVLVIIFASSILLAFEDIYLNEKPRLKLAIFYLDITFCLLFFLEMVLKLVALGFVHYYTHFWTILDFTIVIITVISLAASGLGMEQITAFRSLRTLRALRPLRAVSRWQGMKIIVNALMLSIPSIFNVLLVCVVFWLIFAIMGVQLFAGKFYKCVNETNMRIPPTEVANKIECYNKNYTWVNSNVNFDNVGGAFLALFQVATFEGWMEIMADAVDVTEVDEQPKFEATVYYYFYFVLFIIFGSFFVLNLVIGVIIDKFSFLKKKYDGTYLDMFLTPTQQNYYNTLKKLGTKKPQKTVKRPKNKCQAVVYDLVMSNQFEIFITTIIITNMIFMAFEHYNQSEVVTEVLATANIAFTILYAVEAIIKIIGLRIHYLRNLWNVFDFLVVTLSVMDAFLNDIFGDGIFMNPSLLRVARMFRIGRIIRLIKWAKGMRKLLFALVISLPALFNIGALLMLVMFIYTIIGMSSFGQIKLSGALNDQVNFQTFGKTFLLLVRLATSAGWNDILGPLLIQPPNCDPNYITTSTGEKIKVVNGDCGMPWLAISYMVSYIIIVFMIVFNMYIAVILENFNQAHAQEEVGITEDDLDMFYGVWEQYDPLATQFIKHEQLSDFIQDLDPPLKVKKPNNVAIATFDLPIVKGGHIHCLDILLALVKFALGGNLEETEAFKRVRTQMEARFDEIFPTREKSEIRTSTLQMRREEMAARTLQRAWKRRKIMRSFPSPEMIRYFIISAPETAV.

Residues methionine 1–cysteine 50 are Cytoplasmic-facing. One copy of the I repeat lies at arginine 41–lysine 342. The chain crosses the membrane as a helical span at residues isoleucine 51–valine 70. Topologically, residues phenylalanine 71–isoleucine 77 are extracellular. The chain crosses the membrane as a helical span at residues serine 78–alanine 99. Residues glycine 100–aspartate 112 are Cytoplasmic-facing. The helical transmembrane segment at alanine 113–isoleucine 134 threads the bilayer. Topologically, residues asparagine 135–threonine 143 are extracellular. A helical; Voltage-sensor membrane pass occupies residues glycine 144–valine 167. The Cytoplasmic portion of the chain corresponds to asparagine 168–serine 179. The chain crosses the membrane as a helical span at residues valine 180–glycine 201. Residues alanine 202–serine 278 lie on the Extracellular side of the membrane. Cysteine 207 and cysteine 255 are oxidised to a cystine. Residues asparagine 248 and asparagine 258 are each glycosylated (N-linked (GlcNAc...) asparagine). The pore-forming intramembrane region spans isoleucine 279 to isoleucine 303. The Extracellular portion of the chain corresponds to arginine 304 to proline 308. Residues tryptophan 309–alanine 331 form a helical membrane-spanning segment. At valine 332–cysteine 406 the chain is on the cytoplasmic side. Residues cysteine 393 to alanine 647 form an II repeat. The helical transmembrane segment at isoleucine 407 to valine 426 threads the bilayer. The Extracellular segment spans residues phenylalanine 427–valine 442. The helical transmembrane segment at leucine 443 to alanine 464 threads the bilayer. Residues phenylalanine 465 to serine 472 are Cytoplasmic-facing. A helical membrane pass occupies residues glycine 473 to valine 491. The Extracellular segment spans residues glutamate 492–serine 498. A helical; Voltage-sensor membrane pass occupies residues valine 499 to leucine 522. The Cytoplasmic portion of the chain corresponds to cysteine 523–serine 531. Residues leucine 532 to leucine 553 traverse the membrane as a helical segment. Topologically, residues phenylalanine 554–aspartate 575 are extracellular. Residues phenylalanine 576–tyrosine 596 constitute an intramembrane region (pore-forming). Residues aspartate 597–phenylalanine 607 lie on the Extracellular side of the membrane. A disulfide bridge links cysteine 598 with cysteine 606. The chain crosses the membrane as a helical span at residues leucine 608–valine 628. Topologically, residues leucine 629 to methionine 777 are cytoplasmic. Residues asparagine 770–leucine 1074 form an III repeat. A helical membrane pass occupies residues valine 778 to isoleucine 797. Residues leucine 798–alanine 815 are Extracellular-facing. The chain crosses the membrane as a helical span at residues isoleucine 816–alanine 837. The Cytoplasmic segment spans residues leucine 838–histidine 846. A helical membrane pass occupies residues phenylalanine 847–leucine 868. Topologically, residues glycine 869–threonine 874 are extracellular. A helical; Voltage-sensor membrane pass occupies residues alanine 875–lysine 898. Residues isoleucine 899–leucine 915 are Cytoplasmic-facing. A helical transmembrane segment spans residues leucine 916–phenylalanine 937. At tyrosine 938 to valine 976 the chain is on the extracellular side. Residues asparagine 942 and asparagine 963 are each glycosylated (N-linked (GlcNAc...) asparagine). An intramembrane region (pore-forming) is located at residues glycine 977–aspartate 998. Residues alanine 999–proline 1009 lie on the Extracellular side of the membrane. A helical transmembrane segment spans residues lysine 1010–valine 1022. The Cytoplasmic segment spans residues leucine 1023 to serine 1100. Threonine 1076 is subject to Phosphothreonine; by PKC. One copy of the IV repeat lies at valine 1083 to glutamine 1386. The helical transmembrane segment at asparagine 1101–phenylalanine 1120 threads the bilayer. Residues glutamate 1121 to valine 1132 lie on the Extracellular side of the membrane. The N-linked (GlcNAc...) asparagine glycan is linked to asparagine 1124. Residues leucine 1133 to glycine 1154 traverse the membrane as a helical segment. Topologically, residues leucine 1155–asparagine 1162 are cytoplasmic. Residues leucine 1163–isoleucine 1184 form a helical membrane-spanning segment. Residues phenylalanine 1185–serine 1194 lie on the Extracellular side of the membrane. A helical; Voltage-sensor transmembrane segment spans residues leucine 1195–arginine 1218. The Cytoplasmic portion of the chain corresponds to lysine 1219–alanine 1236. Residues leucine 1237–leucine 1258 form a helical membrane-spanning segment. The Extracellular segment spans residues serine 1259–threonine 1270. An intramembrane region (pore-forming) is located at residues phenylalanine 1271–proline 1293. At leucine 1294 to methionine 1323 the chain is on the extracellular side. Residues proline 1324–tyrosine 1346 form a helical membrane-spanning segment. Residues isoleucine 1347–valine 1522 are Cytoplasmic-facing.

Belongs to the sodium channel (TC 1.A.1.10) family.

It is found in the cell membrane. Mediates the voltage-dependent sodium ion permeability of excitable membranes. Assuming opened or closed conformations in response to the voltage difference across the membrane, the protein forms a sodium-selective channel through which Na(+) ions may pass in accordance with their electrochemical gradient. This Heterololigo bleekeri (Spear squid) protein is Sodium channel protein 1 brain.